Consider the following 231-residue polypeptide: Orotidine 5'-phosphate decarboxylase (231 aa).

Substrate contacts are provided by residues D11, K33, 60–69 (DLKLHDIPNT), T119, R181, Q190, G210, and R211. Catalysis depends on K62, which acts as the Proton donor.

Belongs to the OMP decarboxylase family. Type 1 subfamily. As to quaternary structure, homodimer.

It catalyses the reaction orotidine 5'-phosphate + H(+) = UMP + CO2. It participates in pyrimidine metabolism; UMP biosynthesis via de novo pathway; UMP from orotate: step 2/2. Its function is as follows. Catalyzes the decarboxylation of orotidine 5'-monophosphate (OMP) to uridine 5'-monophosphate (UMP). This Malacoplasma penetrans (strain HF-2) (Mycoplasma penetrans) protein is Orotidine 5'-phosphate decarboxylase.